A 262-amino-acid polypeptide reads, in one-letter code: Acyl-[acyl-carrier-protein]--UDP-N-acetylglucosamine O-acyltransferase (262 aa).

It belongs to the transferase hexapeptide repeat family. LpxA subfamily. In terms of assembly, homotrimer.

The protein resides in the cytoplasm. It carries out the reaction a (3R)-hydroxyacyl-[ACP] + UDP-N-acetyl-alpha-D-glucosamine = a UDP-3-O-[(3R)-3-hydroxyacyl]-N-acetyl-alpha-D-glucosamine + holo-[ACP]. It participates in glycolipid biosynthesis; lipid IV(A) biosynthesis; lipid IV(A) from (3R)-3-hydroxytetradecanoyl-[acyl-carrier-protein] and UDP-N-acetyl-alpha-D-glucosamine: step 1/6. Involved in the biosynthesis of lipid A, a phosphorylated glycolipid that anchors the lipopolysaccharide to the outer membrane of the cell. This chain is Acyl-[acyl-carrier-protein]--UDP-N-acetylglucosamine O-acyltransferase, found in Salmonella typhi.